The sequence spans 141 residues: Lutropin subunit beta (141 aa).

Positions 1 to 21 (MERYQELTVLLLLLLLEGGSG) are cleaved as a signal peptide. Intrachain disulfides connect Cys-30–Cys-78, Cys-44–Cys-93, Cys-47–Cys-131, Cys-55–Cys-109, Cys-59–Cys-111, and Cys-114–Cys-121. An N-linked (GlcNAc...) asparagine glycan is attached at Asn-34.

Belongs to the glycoprotein hormones subunit beta family. In terms of assembly, heterodimer of a common alpha chain and a unique beta chain which confers biological specificity to thyrotropin, lutropin, follitropin and gonadotropin.

It localises to the secreted. Its function is as follows. Promotes spermatogenesis and ovulation by stimulating the testes and ovaries to synthesize steroids. The protein is Lutropin subunit beta (LHB) of Monodelphis domestica (Gray short-tailed opossum).